A 478-amino-acid polypeptide reads, in one-letter code: Transcription factor PIF1 (478 aa).

Thr-10 carries the phosphothreonine; by CK2 modification. Disordered stretches follow at residues 56 to 80 (LHTKKPSSSPPKLLPSMDPQQQPSS), 122 to 144 (VSQVTAARPPVSSTNESRPPVRN), 172 to 210 (VRESTQVSPSATPSAAASESGLTRRTDGTDSSAVAGGGA), 230 to 294 (TSSS…LSER), and 391 to 478 (TQTH…HTTG). Positions 69–80 (LPSMDPQQQPSS) are enriched in low complexity. Over residues 179-189 (SPSATPSAAAS) the composition is skewed to low complexity. The residue at position 197 (Thr-197) is a Phosphothreonine; by CK2. Residue Ser-202 is modified to Phosphoserine; by CK2. Composition is skewed to basic and acidic residues over residues 238 to 272 (SEIEPEKTNVDDRKRKEREATTTDETESRSEETKQ) and 284 to 294 (RAAEVHNLSER). The 50-residue stretch at 284-333 (RAAEVHNLSERKRRDRINERMKALQELIPRCNKSDKASMLDEAIEYMKSL) folds into the bHLH domain. Residues 415 to 426 (PNQQYDPTSGQP) are compositionally biased toward polar residues. 4 positions are modified to phosphoserine; by CK2: Ser-464, Ser-465, Ser-466, and Ser-469. Positions 465-478 (SSKESEDHGNHTTG) are enriched in basic and acidic residues.

As to quaternary structure, homodimer. Interacts with the photoactivated conformer (Pfr) of phytochromes A and B, PHYA and PHYB. Also interacts with APRR1/TOC1. Binds to RGL2, RGA and FHY3 (via N-terminus). Associates to PTAC12/HMR/PAP5 which acts as a transcriptional coactivator. Binds directly to PCH1 and PCHL; this interaction facilitates its association with phyB and its subsequent light-induced degradation. Phosphorylated at Thr-10, Thr-197, Ser-202, Ser-464, Ser-465, Ser-466 and Ser-469 by CK2. Phosphorylated and ubiquitinated after an exposure to light (especially red and far-red), in a phytochrome-dependent manner. Modified proteins undergo a proteasome-dependent degradation. Its stability and degradation plays a central role in photomorphogenesis of seedlings. As to expression, mainly expressed in leaves, stems and seedlings, and, to a lower extent, in fruits, flowers and roots.

The protein localises to the nucleus. DNA-binding ability is inhibited by PCH1 and PCHL to negatively regulate the expressions of its target genes. Transcription activator. Negatively regulates chlorophyll biosynthesis and seed germination in the dark, and lightinduced degradation of PIF1 relieves this negative regulation to promote photomorphogenesis. Binds to the G-box motif (5'-CACGTG-3') found in many light-regulated promoters. Promotes the expression of SOM, and thus modulates responses to abscisic acid (ABA) and gibberellic acid (GA). In Arabidopsis thaliana (Mouse-ear cress), this protein is Transcription factor PIF1.